The following is a 141-amino-acid chain: Photosystem II protein PSBR, chloroplastic (141 aa).

Residues 1–27 (MATMQISAKGLAPLRPRVSSRRVVKPV) constitute a chloroplast transit peptide. 2 positions are modified to phosphothreonine: T34 and T37. The residue at position 43 (S43) is a Phosphoserine. Residues 114–134 (GLIAWAGLVLVLLAVGVNLII) traverse the membrane as a helical segment.

Belongs to the psbR family.

The protein localises to the plastid. It localises to the chloroplast thylakoid membrane. In terms of biological role, associated with the oxygen-evolving complex of photosystem II (PSII). Is required for the stable binding of LHCSR3 to PSII-LHCII supercomplexes and is essential for efficient energy-dependent quenching and the integrity of the PSII-LHCII-LHCSR3 supercomplex under continuous high light. The chain is Photosystem II protein PSBR, chloroplastic from Chlamydomonas reinhardtii (Chlamydomonas smithii).